A 309-amino-acid polypeptide reads, in one-letter code: Probable RuBisCO transcriptional regulator (309 aa).

One can recognise an HTH lysR-type domain in the interval 5–62; the sequence is FTLQQLRILKAIATEKSFTRAAEVLFVSQPSLSKQIKTLESRLNISLLNRENNIVSLT. Residues 22–41 constitute a DNA-binding region (H-T-H motif); it reads FTRAAEVLFVSQPSLSKQIK.

It belongs to the LysR transcriptional regulatory family.

It localises to the plastid. It is found in the chloroplast. Trans-acting transcriptional regulator of RuBisCO genes (rbcL and rbcS) expression. This is Probable RuBisCO transcriptional regulator (rbcR) from Trieres chinensis (Marine centric diatom).